A 481-amino-acid chain; its full sequence is uncharacterized protein (481 aa).

A compositionally biased stretch (basic residues) spans M1–N18. Residues M1–G37 form a disordered region. Residues L24–R34 are compositionally biased toward polar residues. The next 2 helical transmembrane spans lie at S172 to I191 and A195 to W214.

The protein localises to the membrane. This is an uncharacterized protein from Coxiella burnetii (strain RSA 493 / Nine Mile phase I).